We begin with the raw amino-acid sequence, 468 residues long: MHDIKWIRDEPVGLITALVRRGGGSDEAKSAAEKLVAYLIGLDEQRRRTLTDLEGKLARRNAASKEIGQAKAQKDEERASRLMAEVANLKADIPTLEALAKDWEKSLDNALAAIPNAPLAEVPPGADEHDNVEKSRFGVARSYAFTPKQHFEVGEALGQMDFETAAKLSGARFVVNKGPLARLERALGQFFLDVHTGEHGYMEVNPPLLVRDDAMFGTAQLPKFREDQFFVNTVDGIEAISAETKGFETFSDEFKSKLTEAMSYQGRWLIPTAEVPLTNLVRESILSEEELPLRLTACTPCFRAEAGAAGRDTRGMIRQHQFTKVELVSITTPEKSAEEHERMLACAEAVLKKLDLHYRVVTLCTGDMGFASQKTYDIEVWLPGQGAFREISSCSVCGDFQARRMNARYRPAEGKGPRFVHTLNGSGVAVGRALVAVLETYQQENGAVTVPDALLPYMGGLKTIEKLK.

An L-serine-binding site is contributed by T272–E274. Residue R303 to E305 participates in ATP binding. Position 326 (E326) interacts with L-serine. E390–S393 is an ATP binding site. An L-serine-binding site is contributed by S426.

It belongs to the class-II aminoacyl-tRNA synthetase family. Type-1 seryl-tRNA synthetase subfamily. As to quaternary structure, homodimer. The tRNA molecule binds across the dimer.

The protein resides in the cytoplasm. The enzyme catalyses tRNA(Ser) + L-serine + ATP = L-seryl-tRNA(Ser) + AMP + diphosphate + H(+). It carries out the reaction tRNA(Sec) + L-serine + ATP = L-seryl-tRNA(Sec) + AMP + diphosphate + H(+). Its pathway is aminoacyl-tRNA biosynthesis; selenocysteinyl-tRNA(Sec) biosynthesis; L-seryl-tRNA(Sec) from L-serine and tRNA(Sec): step 1/1. Catalyzes the attachment of serine to tRNA(Ser). Is also able to aminoacylate tRNA(Sec) with serine, to form the misacylated tRNA L-seryl-tRNA(Sec), which will be further converted into selenocysteinyl-tRNA(Sec). The protein is Serine--tRNA ligase of Xanthobacter autotrophicus (strain ATCC BAA-1158 / Py2).